The primary structure comprises 295 residues: uncharacterized protein (295 aa).

Residues 57 to 67 are compositionally biased toward basic residues; it reads RKLLVKQKRKS. The interval 57-94 is disordered; the sequence is RKLLVKQKRKSNKEFQSNIIKKRKDEERKGTLKTEQAN. The segment covering 79-88 has biased composition (basic and acidic residues); it reads RKDEERKGTL. 2 coiled-coil regions span residues 87–116 and 259–286; these read TLKT…YDQY and DVLT…LGER.

Its subcellular location is the nucleus. This is an uncharacterized protein from Schizosaccharomyces pombe (strain 972 / ATCC 24843) (Fission yeast).